Consider the following 141-residue polypeptide: Large ribosomal subunit protein uL11 (141 aa).

The protein belongs to the universal ribosomal protein uL11 family. As to quaternary structure, part of the ribosomal stalk of the 50S ribosomal subunit. Interacts with L10 and the large rRNA to form the base of the stalk. L10 forms an elongated spine to which L12 dimers bind in a sequential fashion forming a multimeric L10(L12)X complex. One or more lysine residues are methylated.

In terms of biological role, forms part of the ribosomal stalk which helps the ribosome interact with GTP-bound translation factors. The polypeptide is Large ribosomal subunit protein uL11 (Moorella thermoacetica (strain ATCC 39073 / JCM 9320)).